Consider the following 275-residue polypeptide: Large ribosomal subunit protein uL2 (275 aa).

Positions Thr-36–Ile-49 are enriched in polar residues. Disordered stretches follow at residues Thr-36 to Lys-59 and Ala-224 to Arg-275. Over residues Thr-50–Lys-59 the composition is skewed to basic residues.

It belongs to the universal ribosomal protein uL2 family. As to quaternary structure, part of the 50S ribosomal subunit. Forms a bridge to the 30S subunit in the 70S ribosome.

Functionally, one of the primary rRNA binding proteins. Required for association of the 30S and 50S subunits to form the 70S ribosome, for tRNA binding and peptide bond formation. It has been suggested to have peptidyltransferase activity; this is somewhat controversial. Makes several contacts with the 16S rRNA in the 70S ribosome. The chain is Large ribosomal subunit protein uL2 from Burkholderia vietnamiensis (strain G4 / LMG 22486) (Burkholderia cepacia (strain R1808)).